We begin with the raw amino-acid sequence, 58 residues long: UPF0337 protein SAV_738 (58 aa).

A disordered region spans residues 1 to 58; it reads MAADEKAQANGEQAKGKVKKVVGGAAGNESLKGKGHAEESKGDLRAAKEKAKDAIKRK. The segment covering 31–58 has biased composition (basic and acidic residues); sequence LKGKGHAEESKGDLRAAKEKAKDAIKRK.

Belongs to the UPF0337 (CsbD) family.

This chain is UPF0337 protein SAV_738, found in Streptomyces avermitilis (strain ATCC 31267 / DSM 46492 / JCM 5070 / NBRC 14893 / NCIMB 12804 / NRRL 8165 / MA-4680).